The following is a 987-amino-acid chain: MAERQSASSPTPSSPPQQQQQTPQQPPQYLLNSKKNFKVKVLNGREVERHPLNSITKTEDTGKPKQSSLSSNASSLQSAAAAASSSTATTDIDPLNNNNNNNTDIDPLNNPLEKKHDPLSETIATMGGLKLIKENHLTNYVDENFMPWDTLKPSILQQYTSDDSNPIQVSFMSTGTSGKIKIPINRLNKILEELEQDKEDSKSTQFSQPDIIMDLETLHSELLKAWAAEERVRSLKIAIQTAKLLSDTSLIKFYPSKFVIATEILDTFGNLVYDRIKKRLQSSKESKNHEILLKEQAKETCRNWFYKIASIRELLPRLFVEISILKCYEFIQGDVNTEPKQVINRISEMIRGIGNPLVANYIRAYLTRRSFDLCPEYKKFVIQLLKDFVFTQKSYEKSKYLENTLSMYRITLTDYMGLYSPSLEWLLQCLAHKATPETLEEVLELFRESKNSLLLNHIISSFPPEYICSNSTMFSNFIKDADTLSYPKYQLYSTFGVNLVLGQPPKNQILSILNDVWKVVTNFENIKDYISVAEVFIEYVLTHCSEKETDVFLKDILRHIIPDKGYETIQSHLQSIVLKIFTHISDFGKLVSFTNFLPLLDLFNGESQKQISRSTLEALSTSKVMTSDPILINTFLTYGKALHDSLNSLSFQDEVRQVTQLVVNCINKIDFGRDVEKQLNFYVECRQTFINFDGVKNRLVYGVCEICEKTLNLVKGKHTPKTTSFIRACVAYCFITIPSIDDIFLKMNLYLVSSSVALQNQALSQADALLKAAITFIQEIPPILEFKQVKSTEDWTISYVSDFISLLVVTPGHPESGPFYLVKALYKVIKEYQWESSSTAKSKLFIQLLLLCSSWAQTSLPYHIEKVESNDQLFTEDPEFNTELTEFYNSLIKEILYDLNLLKDEPDNLTQKKVGIICIDLINALLNVGELNSKTASLIFNLYNMAKKIIPSTCFNEITYLKNTLAFIGTLESKMGQDIFNKLSQQQ.

Residues 1–23 are compositionally biased toward low complexity; it reads MAERQSASSPTPSSPPQQQQQTP. Residues 1 to 115 are disordered; the sequence is MAERQSASSP…DPLNNPLEKK (115 aa). Basic and acidic residues predominate over residues 43-63; that stretch reads NGREVERHPLNSITKTEDTGK. Residues 66-111 are compositionally biased toward low complexity; sequence QSSLSSNASSLQSAAAAASSSTATTDIDPLNNNNNNNTDIDPLNNP.

The protein belongs to the VPS35L family. Component of the heterotrimeric retriever complex.

It is found in the endosome. In terms of biological role, acts as a component of the retriever complex. The retriever complex is a heterotrimeric complex related to retromer cargo-selective complex (CSC) and essential for retromer-independent retrieval and recycling of numerous cargos. The sequence is that of VPS35 endosomal protein sorting factor-like from Dictyostelium discoideum (Social amoeba).